Here is a 601-residue protein sequence, read N- to C-terminus: uncharacterized protein (601 aa).

3 consecutive transmembrane segments (helical) span residues isoleucine 74–isoleucine 94, valine 104–glycine 124, and leucine 531–tyrosine 551.

Its subcellular location is the endoplasmic reticulum membrane. This is an uncharacterized protein from Schizosaccharomyces pombe (strain 972 / ATCC 24843) (Fission yeast).